The sequence spans 217 residues: uncharacterized protein (217 aa).

2 disordered regions span residues 1 to 85 (MGVK…RGNT) and 167 to 189 (KLRS…EPDE). The span at 38–48 (AKSDKDKRKGS) shows a compositional bias: basic and acidic residues. Residues 60–78 (NALPTKNLTTPPALNPLTT) show a composition bias toward low complexity. Basic and acidic residues predominate over residues 172–189 (PHKDQHNSATNKDQEPDE).

This is an uncharacterized protein from Saccharomyces cerevisiae (strain ATCC 204508 / S288c) (Baker's yeast).